The following is a 235-amino-acid chain: Proteasome subunit alpha (235 aa).

Belongs to the peptidase T1A family. As to quaternary structure, the 20S proteasome core is composed of 14 alpha and 14 beta subunits that assemble into four stacked heptameric rings, resulting in a barrel-shaped structure. The two inner rings, each composed of seven catalytic beta subunits, are sandwiched by two outer rings, each composed of seven alpha subunits. The catalytic chamber with the active sites is on the inside of the barrel. Has a gated structure, the ends of the cylinder being occluded by the N-termini of the alpha-subunits. Is capped by the proteasome-associated ATPase, ARC.

It is found in the cytoplasm. The protein operates within protein degradation; proteasomal Pup-dependent pathway. Its activity is regulated as follows. The formation of the proteasomal ATPase ARC-20S proteasome complex, likely via the docking of the C-termini of ARC into the intersubunit pockets in the alpha-rings, may trigger opening of the gate for substrate entry. Interconversion between the open-gate and close-gate conformations leads to a dynamic regulation of the 20S proteasome proteolysis activity. In terms of biological role, component of the proteasome core, a large protease complex with broad specificity involved in protein degradation. This chain is Proteasome subunit alpha, found in Arthrobacter sp. (strain FB24).